A 175-amino-acid polypeptide reads, in one-letter code: Pancreatic beta cell growth factor (175 aa).

The N-terminal stretch at 1–26 (MMLPMTLCRMSWMLLSCLMFLSWVEG) is a signal peptide. In terms of domain architecture, C-type lectin spans 38–175 (ITCPQGSVAY…ELPYICKFKV (138 aa)). 3 disulfides stabilise this stretch: Cys40–Cys51, Cys68–Cys171, and Cys146–Cys163.

In terms of tissue distribution, expressed only in CW animals pancreas and to a lesser extent in duodenum. In pancreas it is found in acinar cells, but not in islets.

It is found in the secreted. In terms of biological role, constituent of ilotropin, which is a partially purified preparation of cellophane wrapping (CW) pancreata. Capable of initiating duct cell proliferation, a prerequisite for islet neogenesis. This is Pancreatic beta cell growth factor (INGAP) from Mesocricetus auratus (Golden hamster).